Here is a 431-residue protein sequence, read N- to C-terminus: Divergent protein kinase domain 1B (431 aa).

Over 1–30 (MRRLRRLAHLVLFCPFSKRLQGRLPGLRVR) the chain is Cytoplasmic. Positions 5–6 (RR) match the May mediate ER retention motif. Residues 31-51 (CIFLAWLGVFAGSWLVYVHYS) form a helical membrane-spanning segment. Residues 52–431 (SYSERCRGHV…WKKISNTKYS (380 aa)) lie on the Lumenal side of the membrane. 2 disulfide bridges follow: Cys-57/Cys-94 and Cys-62/Cys-117.

It belongs to the DIPK family. In terms of processing, among the many cysteines in the lumenal domain, most are probably involved in disulfide bonds.

It localises to the endoplasmic reticulum membrane. The chain is Divergent protein kinase domain 1B from Homo sapiens (Human).